The primary structure comprises 119 residues: Ribonuclease P protein component (119 aa).

Belongs to the RnpA family. Consists of a catalytic RNA component (M1 or rnpB) and a protein subunit.

The enzyme catalyses Endonucleolytic cleavage of RNA, removing 5'-extranucleotides from tRNA precursor.. RNaseP catalyzes the removal of the 5'-leader sequence from pre-tRNA to produce the mature 5'-terminus. It can also cleave other RNA substrates such as 4.5S RNA. The protein component plays an auxiliary but essential role in vivo by binding to the 5'-leader sequence and broadening the substrate specificity of the ribozyme. The chain is Ribonuclease P protein component from Aeromonas hydrophila subsp. hydrophila (strain ATCC 7966 / DSM 30187 / BCRC 13018 / CCUG 14551 / JCM 1027 / KCTC 2358 / NCIMB 9240 / NCTC 8049).